A 187-amino-acid chain; its full sequence is GTP cyclohydrolase 1 (187 aa).

3 residues coordinate Zn(2+): Cys-76, His-79, and Cys-148.

It belongs to the GTP cyclohydrolase I family. As to quaternary structure, toroid-shaped homodecamer, composed of two pentamers of five dimers.

It catalyses the reaction GTP + H2O = 7,8-dihydroneopterin 3'-triphosphate + formate + H(+). It participates in cofactor biosynthesis; 7,8-dihydroneopterin triphosphate biosynthesis; 7,8-dihydroneopterin triphosphate from GTP: step 1/1. This is GTP cyclohydrolase 1 from Streptococcus agalactiae serotype V (strain ATCC BAA-611 / 2603 V/R).